The sequence spans 687 residues: Triadin (687 aa).

Topologically, residues 1-47 are cytoplasmic; sequence MTEITAEGNASITTTVIDNKNGSVPKSPGKVLKRTVTEDIVTTFSSP. Residues 48-68 traverse the membrane as a helical segment; it reads AAWLLVIALIITWSAVAIVMF. Over 69–687 the chain is Lumenal; the sequence is DLVDYKNFSA…NSPGQKQQEQ (619 aa). A compositionally biased stretch (acidic residues) spans 117–130; sequence DGDEDDEDADEDID. Disordered regions lie at residues 117-265, 280-643, and 660-687; these read DGDE…EQKD, GDLK…QKSP, and FQFPVTPVQHSGENPGKSNSPGQKQQEQ. Basic and acidic residues predominate over residues 131 to 265; that stretch reads KGEIEEPPLK…PAVPKHEQKD (135 aa). Positions 295 to 306 are enriched in polar residues; that stretch reads LTASRPALSTPS. S303 and S306 each carry phosphoserine. Residues 307-356 are compositionally biased toward basic and acidic residues; the sequence is LEEKEKEEKKKVEKKVTSDTKKKEKGEAKKKSEKETVIDGKGKEPGKPPE. The span at 357 to 370 shows a compositional bias: low complexity; that stretch reads TKQTTTKLTTQAAA. 4 stretches are compositionally biased toward basic and acidic residues: residues 371–390, 396–431, 442–459, and 466–501; these read TKDEKKEDSKKMKKPPEEKP, EKKEKHIEPAKTPKKEHPAPSEKHRKAKAEQAKEEI, GKKEEKAKTVEQGKDVKP, and LKKEEKSEPQPKKEVKLETQLKKEEKSEPQVKKEAK. A glycan (N-linked (GlcNAc...) asparagine) is linked at N514. Composition is skewed to basic and acidic residues over residues 539–583 and 594–630; these read TAEK…KVPP and TRAEKRGKISKDSKDAPAPKKDKDSKDVLHSKKDKEV. 2 stretches are compositionally biased toward polar residues: residues 631–643 and 667–687; these read TNNVSSPKKQKSP and VQHSGENPGKSNSPGQKQQEQ.

In terms of assembly, homooligomer of variable subunit number; disulfide-linked. Interacts with CASQ1 in skeletal muscle. Interacts with CASQ2. Interacts with RYR1 in skeletal muscle. In terms of processing, phosphorylated by CaMK2. N-glycosylated. Detected in skeletal muscle (at protein level). Detected in skeletal muscle.

The protein localises to the sarcoplasmic reticulum membrane. It is found in the microsome. Its subcellular location is the cell membrane. The protein resides in the sarcolemma. In terms of biological role, contributes to the regulation of lumenal Ca2+ release via the sarcoplasmic reticulum calcium release channels RYR1 and RYR2, a key step in triggering skeletal and heart muscle contraction. Required for normal organization of the triad junction, where T-tubules and the sarcoplasmic reticulum terminal cisternae are in close contact. Required for normal skeletal muscle strength. Plays a role in excitation-contraction coupling in the heart and in regulating the rate of heart beats. This chain is Triadin, found in Rattus norvegicus (Rat).